The following is a 216-amino-acid chain: Adenylate kinase (216 aa).

10–15 contributes to the ATP binding site; that stretch reads GAGKGT. The tract at residues 30-59 is NMP; that stretch reads STGDIFRANIKEKTPLGIEAKRYIDNGQLV. Residues Thr31, Arg36, 57-59, 85-88, and Gln92 each bind AMP; these read QLV and GFPR. The LID stretch occupies residues 126 to 163; sequence GRRVCTSCGASYHIRFNPPKIEGKCDICDNELIQRKDD. Arg127 lines the ATP pocket. 2 residues coordinate Zn(2+): Cys130 and Cys133. 136 to 137 is a binding site for ATP; the sequence is SY. 2 residues coordinate Zn(2+): Cys150 and Cys153. AMP is bound by residues Arg160 and Arg171. Glu199 serves as a coordination point for ATP.

The protein belongs to the adenylate kinase family. In terms of assembly, monomer.

Its subcellular location is the cytoplasm. The catalysed reaction is AMP + ATP = 2 ADP. It functions in the pathway purine metabolism; AMP biosynthesis via salvage pathway; AMP from ADP: step 1/1. Catalyzes the reversible transfer of the terminal phosphate group between ATP and AMP. Plays an important role in cellular energy homeostasis and in adenine nucleotide metabolism. In Clostridium botulinum (strain Langeland / NCTC 10281 / Type F), this protein is Adenylate kinase.